An 869-amino-acid chain; its full sequence is Probable beta-glucosidase F (869 aa).

Residues 1–19 (MRVLSAIALVASLASSALS) form the signal peptide. 2 N-linked (GlcNAc...) asparagine glycosylation sites follow: asparagine 77 and asparagine 261. The active site involves aspartate 289. Asparagine 332, asparagine 364, asparagine 399, and asparagine 478 each carry an N-linked (GlcNAc...) asparagine glycan. A disordered region spans residues 677-697 (STYPPTRPPKGPTPTYPTAIP). Pro residues predominate over residues 681–691 (PTRPPKGPTPT). Asparagine 728 carries an N-linked (GlcNAc...) asparagine glycan.

The protein belongs to the glycosyl hydrolase 3 family.

It localises to the secreted. It catalyses the reaction Hydrolysis of terminal, non-reducing beta-D-glucosyl residues with release of beta-D-glucose.. Its pathway is glycan metabolism; cellulose degradation. Its function is as follows. Beta-glucosidases are one of a number of cellulolytic enzymes involved in the degradation of cellulosic biomass. Catalyzes the last step releasing glucose from the inhibitory cellobiose. This chain is Probable beta-glucosidase F (bglF), found in Aspergillus fumigatus (strain CBS 144.89 / FGSC A1163 / CEA10) (Neosartorya fumigata).